Here is a 166-residue protein sequence, read N- to C-terminus: uncharacterized protein (166 aa).

This is an uncharacterized protein from Invertebrate iridescent virus 6 (IIV-6).